Reading from the N-terminus, the 169-residue chain is Peptide methionine sulfoxide reductase MsrA (169 aa).

The active site involves cysteine 10.

The protein belongs to the MsrA Met sulfoxide reductase family.

The catalysed reaction is L-methionyl-[protein] + [thioredoxin]-disulfide + H2O = L-methionyl-(S)-S-oxide-[protein] + [thioredoxin]-dithiol. It carries out the reaction [thioredoxin]-disulfide + L-methionine + H2O = L-methionine (S)-S-oxide + [thioredoxin]-dithiol. Functionally, has an important function as a repair enzyme for proteins that have been inactivated by oxidation. Catalyzes the reversible oxidation-reduction of methionine sulfoxide in proteins to methionine. The protein is Peptide methionine sulfoxide reductase MsrA of Streptococcus pyogenes serotype M12 (strain MGAS2096).